A 357-amino-acid polypeptide reads, in one-letter code: Sorbitol dehydrogenase (357 aa).

The residue at position 2 (A2) is an N-acetylalanine. A Zn(2+)-binding site is contributed by C45. Substrate is bound at residue Y51. 2 residues coordinate Zn(2+): H70 and E71. E156 contacts substrate. NAD(+) is bound by residues I184, D204, and R209. 2 positions are modified to phosphoserine: S211 and S225. NAD(+) contacts are provided by residues 273-275 and 297-299; these read VGL and VFR. Residues R299 and Y300 each contribute to the substrate site.

It belongs to the zinc-containing alcohol dehydrogenase family. In terms of assembly, homotetramer. Zn(2+) serves as cofactor.

It localises to the mitochondrion membrane. The protein resides in the cell projection. It is found in the cilium. Its subcellular location is the flagellum. It catalyses the reaction xylitol + NAD(+) = D-xylulose + NADH + H(+). It carries out the reaction L-iditol + NAD(+) = keto-L-sorbose + NADH + H(+). The enzyme catalyses keto-D-fructose + NADH + H(+) = D-sorbitol + NAD(+). Its function is as follows. Polyol dehydrogenase that catalyzes the reversible NAD(+)-dependent oxidation of various sugar alcohols. Is active with xylitol, L-iditol and D-sorbitol (D-glucitol) as substrates, leading to the C2-oxidized products D-xylulose, L-sorbose and D-fructose, respectively. Is a key enzyme in the polyol pathway that interconverts glucose and fructose via sorbitol, which constitutes an important alternate route for glucose metabolism. May play a role in sperm motility by using sorbitol as an alternative energy source for sperm motility. The polypeptide is Sorbitol dehydrogenase (SORD) (Macaca fascicularis (Crab-eating macaque)).